We begin with the raw amino-acid sequence, 190 residues long: Voltage-dependent calcium channel gamma-like subunit (190 aa).

A run of 4 helical transmembrane segments spans residues Phe25–Ile45, Ala96–Glu116, Leu131–Asn151, and Leu155–Asn175.

This sequence belongs to the PMP-22/EMP/MP20 family. CACNG subfamily. The L-type calcium channel is composed of five subunits: alpha-1, alpha-2/delta, beta and gamma.

The protein localises to the membrane. Its function is as follows. Thought to stabilize the calcium channel in an inactivated (closed) state. Modulates calcium current when coexpressed with CACNA1G. This is Voltage-dependent calcium channel gamma-like subunit from Homo sapiens (Human).